The chain runs to 138 residues: Acidic phospholipase A2 Cvv-E6a (138 aa).

The first 16 residues, 1-16, serve as a signal peptide directing secretion; sequence MRTLWIVAVLLLGVEG. Disulfide bonds link Cys-42-Cys-131, Cys-44-Cys-60, Cys-59-Cys-111, Cys-65-Cys-138, Cys-66-Cys-104, Cys-73-Cys-97, and Cys-91-Cys-102. Residues Tyr-43, Gly-45, and Gly-47 each contribute to the Ca(2+) site. Residue His-63 is part of the active site. Position 64 (Asp-64) interacts with Ca(2+). The active site involves Asp-105.

This sequence belongs to the phospholipase A2 family. Group II subfamily. D49 sub-subfamily. The cofactor is Ca(2+). As to expression, expressed by the venom gland.

Its subcellular location is the secreted. The enzyme catalyses a 1,2-diacyl-sn-glycero-3-phosphocholine + H2O = a 1-acyl-sn-glycero-3-phosphocholine + a fatty acid + H(+). In terms of biological role, snake venom phospholipase A2 (PLA2) that significantly inhibits ADP-induced platelet aggregation in platelet-rich plasma of human, rabbit and guinea pig. PLA2 catalyzes the calcium-dependent hydrolysis of the 2-acyl groups in 3-sn-phosphoglycerides. This Crotalus viridis viridis (Prairie rattlesnake) protein is Acidic phospholipase A2 Cvv-E6a.